We begin with the raw amino-acid sequence, 392 residues long: L-lactate dehydrogenase (392 aa).

The 380-residue stretch at 1-380 (MIISASTDYR…GSDSLVTGSA (380 aa)) folds into the FMN hydroxy acid dehydrogenase domain. A substrate-binding site is contributed by Tyr-24. FMN is bound by residues Ser-106 and Gln-127. A substrate-binding site is contributed by Tyr-129. Residue Thr-155 participates in FMN binding. Residue Arg-164 coordinates substrate. Lys-251 is a binding site for FMN. His-275 acts as the Proton acceptor in catalysis. A substrate-binding site is contributed by Arg-278. 306–330 (DSGVRNGLDVVRMIAMGADTILLGR) provides a ligand contact to FMN.

The protein belongs to the FMN-dependent alpha-hydroxy acid dehydrogenase family. It depends on FMN as a cofactor.

The protein resides in the cell inner membrane. The enzyme catalyses (S)-lactate + A = pyruvate + AH2. Catalyzes the conversion of L-lactate to pyruvate. Is coupled to the respiratory chain. The protein is L-lactate dehydrogenase of Chromohalobacter salexigens (strain ATCC BAA-138 / DSM 3043 / CIP 106854 / NCIMB 13768 / 1H11).